Here is a 783-residue protein sequence, read N- to C-terminus: Cyclic di-GMP phosphodiesterase NbdA (783 aa).

Residues 81–274 form the MHYT domain; that stretch reads YSPSLVALAF…FTGMAALVLS (194 aa). 7 consecutive transmembrane segments (helical) span residues 84 to 104, 120 to 140, 150 to 170, 176 to 196, 215 to 235, 255 to 275, and 292 to 312; these read SLVA…LDMV, IGAF…MLAF, LPIT…TMYM, FGLL…AAMH, LFAL…AAVP, LLAG…VLSV, and LGWL…WAAW. The Cytoplasmic segment spans residues 313–783; the sequence is SEKQRERRLS…APPLRSLNQA (471 aa). The 133-residue stretch at 375-507 folds into the GGDEF domain; it reads KGLAVMFLDL…GRNNAQFFSR (133 aa). The EAL domain occupies 516–770; the sequence is ELQMEEELRQ…ALEEFLRAYR (255 aa). The 3',3'-c-di-GMP site is built by Q537, E551, R555, N610, and N615. Position 551 (E551) interacts with Mg(2+). N610 provides a ligand contact to Mg(2+). Residues E642, D672, and D673 each coordinate Mg(2+). Position 672 (D672) interacts with 3',3'-c-di-GMP. R696 serves as a coordination point for 3',3'-c-di-GMP. E729 is a Mg(2+) binding site. E732 and Y751 together coordinate 3',3'-c-di-GMP.

The cofactor is Mg(2+).

It is found in the cell inner membrane. It carries out the reaction 3',3'-c-di-GMP + H2O = 5'-phosphoguanylyl(3'-&gt;5')guanosine + H(+). PDE activity is stimulated by GTP. It could also be stimulated by NO. Its function is as follows. Displays c-di-GMP-specific phosphodiesterase (PDE) activity. Seems to play a specific role in nitric oxide (NO)-induced biofilm dispersion. Enhanced NbdA synthesis in the presence of NO increases PDE activity, leading to reduced cellular c-di-GMP levels and biofilm dispersion. Does not show diguanylate cyclase (DGC) activity. This chain is Cyclic di-GMP phosphodiesterase NbdA, found in Pseudomonas aeruginosa (strain ATCC 15692 / DSM 22644 / CIP 104116 / JCM 14847 / LMG 12228 / 1C / PRS 101 / PAO1).